Here is a 142-residue protein sequence, read N- to C-terminus: Phosphoribosyl-AMP cyclohydrolase (142 aa).

Asp-92 serves as a coordination point for Mg(2+). Position 93 (Cys-93) interacts with Zn(2+). Residues Asp-94 and Asp-96 each contribute to the Mg(2+) site. Zn(2+) is bound by residues Cys-109 and Cys-116.

It belongs to the PRA-CH family. Homodimer. Mg(2+) is required as a cofactor. It depends on Zn(2+) as a cofactor.

The protein localises to the cytoplasm. It carries out the reaction 1-(5-phospho-beta-D-ribosyl)-5'-AMP + H2O = 1-(5-phospho-beta-D-ribosyl)-5-[(5-phospho-beta-D-ribosylamino)methylideneamino]imidazole-4-carboxamide. The protein operates within amino-acid biosynthesis; L-histidine biosynthesis; L-histidine from 5-phospho-alpha-D-ribose 1-diphosphate: step 3/9. In terms of biological role, catalyzes the hydrolysis of the adenine ring of phosphoribosyl-AMP. The protein is Phosphoribosyl-AMP cyclohydrolase of Alcanivorax borkumensis (strain ATCC 700651 / DSM 11573 / NCIMB 13689 / SK2).